The sequence spans 492 residues: T-box transcription factor TBX5-A (492 aa).

The tract at residues 1–43 is disordered; the sequence is MADSEDTFRLQNSPSDSEPKDLQNEGKSDKQNAAVSKSPSSQT. A compositionally biased stretch (basic and acidic residues) spans 17-30; it reads SEPKDLQNEGKSDK. Over residues 31 to 43 the composition is skewed to polar residues; it reads QNAAVSKSPSSQT. The segment at residues 62-237 is a DNA-binding region (T-box); it reads LWTKFHEVGT…NNPFAKGFRG (176 aa). The disordered stretch occupies residues 331–352; sequence AGEHPYKKPYVESSSSEDDHYY.

As to quaternary structure, monomer. Homodimer (via the T-box); binds DNA as homodimer. As to expression, expressed in the dorsal optic cup of developing eye, pectoral fin buds and heart. At 31 hpf, when the pectoral fin buds have begun bulging outwards, restricted expression is detected throughout the mesenchyme of the early fin buds and these high levels of expression continue until later stages.

Its subcellular location is the nucleus. It localises to the cytoplasm. Its function is as follows. Required for pectoral fin formation. Together with tbx5b, involved in eye and heart development. Required for the looping stage of heart development. May bind to the core DNA motif of promoters. This is T-box transcription factor TBX5-A (tbx5a) from Danio rerio (Zebrafish).